The following is a 156-amino-acid chain: Cytochrome c-type biogenesis protein CcmE 1 (156 aa).

The Cytoplasmic segment spans residues 1 to 8 (MNATRKQR). Residues 9–29 (LCLVIGVLAAAALAVTLIVFA) form a helical; Signal-anchor for type II membrane protein membrane-spanning segment. Over 30–156 (LQRNMSYLFT…ATAAPLTTPR (127 aa)) the chain is Periplasmic. Heme is bound by residues H123 and Y127.

This sequence belongs to the CcmE/CycJ family.

It localises to the cell inner membrane. In terms of biological role, heme chaperone required for the biogenesis of c-type cytochromes. Transiently binds heme delivered by CcmC and transfers the heme to apo-cytochromes in a process facilitated by CcmF and CcmH. The chain is Cytochrome c-type biogenesis protein CcmE 1 from Xanthomonas oryzae pv. oryzae (strain MAFF 311018).